Here is a 254-residue protein sequence, read N- to C-terminus: 5'-nucleotidase SurE (254 aa).

A divalent metal cation-binding residues include Asp-8, Asp-9, Ser-39, and Asn-91.

It belongs to the SurE nucleotidase family. The cofactor is a divalent metal cation.

It localises to the cytoplasm. The enzyme catalyses a ribonucleoside 5'-phosphate + H2O = a ribonucleoside + phosphate. Functionally, nucleotidase that shows phosphatase activity on nucleoside 5'-monophosphates. This chain is 5'-nucleotidase SurE, found in Methylibium petroleiphilum (strain ATCC BAA-1232 / LMG 22953 / PM1).